The following is a 1378-amino-acid chain: Protein CLASP-1 (1378 aa).

One copy of the HEAT 1 repeat lies at 168–206 (LIPQLCRLTNDPNSEVRDVSTQCLIDLMVYGGKPIVAKI). Disordered stretches follow at residues 231 to 254 (RGDL…RNSL), 266 to 325 (IHPS…TRSS), and 590 to 725 (MLRD…HQTP). Low complexity-rich tracts occupy residues 269–283 (SAST…RLST) and 610–619 (NQKQQPNQQN). Composition is skewed to polar residues over residues 620–630 (ISQKFLSQRSA) and 637–648 (IQLSVKPQTTAI). Residues 664-676 (SSTSTSFSAVRSS) are compositionally biased toward low complexity. Over residues 677-690 (GYGQNQSTTPNRAK) the composition is skewed to polar residues. Low complexity predominate over residues 704 to 721 (TNGNNNNKSSSSSPSTST). Positions 740–767 (ASLTQEQANCLQNAMNTAKDEMSKNNED) form a coiled coil. A compositionally biased stretch (basic and acidic residues) spans 775–784 (IRKTPPKEVP). The disordered stretch occupies residues 775-823 (IRKTPPKEVPRSYNNSPFKPSNLDSSVHRSYNNNSPFRPSSGSVGSGSN). Over residues 786–812 (SYNNSPFKPSNLDSSVHRSYNNNSPFR) the composition is skewed to polar residues. One copy of the HEAT 2 repeat lies at 1305–1341 (HLIVNDVAPCFVTAYESMSSTVRKCAVFGLVALVQRV).

It belongs to the CLASP family.

The protein localises to the cytoplasm. Its subcellular location is the cytoskeleton. Microtubule plus-end tracking protein that promotes the stabilization of dynamic microtubules. Operates redundantly with cls-2 and cls-3 in regulating microtubule processes which position the spindle during asymmetric cell division. The sequence is that of Protein CLASP-1 (cls-1) from Caenorhabditis elegans.